We begin with the raw amino-acid sequence, 227 residues long: Adapter protein MecA 1 (227 aa).

It belongs to the MecA family. As to quaternary structure, homodimer.

Functionally, enables the recognition and targeting of unfolded and aggregated proteins to the ClpC protease or to other proteins involved in proteolysis. Acts negatively in the development of competence by binding ComK and recruiting it to the ClpCP protease. When overexpressed, inhibits sporulation. Also involved in Spx degradation by ClpC. The chain is Adapter protein MecA 1 (mecA1) from Bacillus anthracis.